A 155-amino-acid polypeptide reads, in one-letter code: Ribonuclease H (155 aa).

The RNase H type-1 domain maps to 4–145; sequence QQKVVEIYTD…ADALARKAIT (142 aa). The Mg(2+) site is built by D13, E51, D73, and D137.

It belongs to the RNase H family. As to quaternary structure, monomer. Requires Mg(2+) as cofactor.

It is found in the cytoplasm. The enzyme catalyses Endonucleolytic cleavage to 5'-phosphomonoester.. In terms of biological role, endonuclease that specifically degrades the RNA of RNA-DNA hybrids. The polypeptide is Ribonuclease H (Bartonella quintana (strain Toulouse) (Rochalimaea quintana)).